Here is a 376-residue protein sequence, read N- to C-terminus: MSSLPADSRIDFAGSPRPTVGVEWEFALVDAKTRELSNEAAAVIAEIGENPHVHKELLRNTVEIVTGICENSGEAMGDLCDTLSTVRRAVRGRGMELFCAGTHPFGKWSAAQLTDAPRYAELIKRTQWWGRQMLIWGVHVHVGVSSAHKVMPIISSLLNQYPHLLALSASSPFWDGEDTGYASNRAMMFQQLPTAGLPFQFQTWHEFEGFVHDQKKTGIIDHLSEIRWDIRPSPQLGTVEVRIFDGVSNVRELSALVALTHCLIVDLDRRLDAGEQLPVMPPWHVQENKWRAARYGLDAVIILDADSNERLVTEDLDDLLNHLEPVAASLHCADELAAVEDIYRLGGSYQRQRRVAEENDGDLREVVDALIGELEL.

It belongs to the glutamate--cysteine ligase type 2 family. YbdK subfamily.

It carries out the reaction L-cysteine + L-glutamate + ATP = gamma-L-glutamyl-L-cysteine + ADP + phosphate + H(+). Functionally, ATP-dependent carboxylate-amine ligase which exhibits weak glutamate--cysteine ligase activity. The sequence is that of Putative glutamate--cysteine ligase 2-1 from Mycolicibacterium smegmatis (strain ATCC 700084 / mc(2)155) (Mycobacterium smegmatis).